Reading from the N-terminus, the 365-residue chain is Succinyl-diaminopimelate desuccinylase (365 aa).

Residue His-65 participates in Zn(2+) binding. Asp-67 is a catalytic residue. Asp-96 is a binding site for Zn(2+). Glu-126 acts as the Proton acceptor in catalysis. Residues Glu-127, Glu-155, and His-340 each contribute to the Zn(2+) site.

This sequence belongs to the peptidase M20A family. DapE subfamily. Homodimer. The cofactor is Zn(2+). It depends on Co(2+) as a cofactor.

It catalyses the reaction N-succinyl-(2S,6S)-2,6-diaminopimelate + H2O = (2S,6S)-2,6-diaminopimelate + succinate. It functions in the pathway amino-acid biosynthesis; L-lysine biosynthesis via DAP pathway; LL-2,6-diaminopimelate from (S)-tetrahydrodipicolinate (succinylase route): step 3/3. Its function is as follows. Catalyzes the hydrolysis of N-succinyl-L,L-diaminopimelic acid (SDAP), forming succinate and LL-2,6-diaminopimelate (DAP), an intermediate involved in the bacterial biosynthesis of lysine and meso-diaminopimelic acid, an essential component of bacterial cell walls. The chain is Succinyl-diaminopimelate desuccinylase from Campylobacter jejuni subsp. doylei (strain ATCC BAA-1458 / RM4099 / 269.97).